Here is a 421-residue protein sequence, read N- to C-terminus: Tubulin gamma-3 chain (421 aa).

Residue A94–G100 coordinates GTP.

Belongs to the tubulin family.

It is found in the cytoplasm. It localises to the cytoskeleton. The protein resides in the microtubule organizing center. Functionally, tubulin is the major constituent of microtubules. The gamma chain is found at microtubule organizing centers (MTOC) such as the spindle poles, suggesting that it is involved in the minus-end nucleation of microtubule assembly. In Zea mays (Maize), this protein is Tubulin gamma-3 chain (TUBG3).